A 392-amino-acid chain; its full sequence is MLLMLSQWLQGLSPEFGFFRVFQYLTFRAVMAAMTALLIGLLAGPKVIRMLTALKIGQPIRGYAMESHLSKSGTPTMGGVLILGAIAISTLLWFDLSNRFVWVVLAVTLGFGAIGWVDDWRKVVRKDPEGMRSREKYFWQSVIGIVAALYLVFCISENSNARVFELFVTWIQSGFSMDLPPQAGLLVPFFKEVSYPLGVLGFVILTYLVIVGSSNAVNLTDGLDGLAIMPVVMVGASLGVFAYVTGSAVYSKYLLFPYIAGAGELLIFCSAMAGAGLAFLWFNTHPAQVFMGDVGALALGGALGTIAIIVRQEIVLAIMGGIFVVEALSVMLQVTWFKYTKRRYGEGRRLLKMAPLHHHFEKSGWKETQVVVRFWIITMLLCLIGLTTLKLR.

Transmembrane regions (helical) follow at residues 24–44, 76–96, 100–120, 137–157, 193–213, 225–245, 262–282, 289–309, 314–334, and 369–389; these read YLTF…LLAG, TMGG…WFDL, FVWV…VDDW, YFWQ…CISE, VSYP…IVGS, GLAI…AYVT, AGEL…FLWF, VFMG…IAII, IVLA…MLQV, and QVVV…LTTL.

It belongs to the glycosyltransferase 4 family. MraY subfamily. The cofactor is Mg(2+).

The protein localises to the cell inner membrane. The catalysed reaction is UDP-N-acetyl-alpha-D-muramoyl-L-alanyl-gamma-D-glutamyl-meso-2,6-diaminopimeloyl-D-alanyl-D-alanine + di-trans,octa-cis-undecaprenyl phosphate = di-trans,octa-cis-undecaprenyl diphospho-N-acetyl-alpha-D-muramoyl-L-alanyl-D-glutamyl-meso-2,6-diaminopimeloyl-D-alanyl-D-alanine + UMP. The protein operates within cell wall biogenesis; peptidoglycan biosynthesis. Its function is as follows. Catalyzes the initial step of the lipid cycle reactions in the biosynthesis of the cell wall peptidoglycan: transfers peptidoglycan precursor phospho-MurNAc-pentapeptide from UDP-MurNAc-pentapeptide onto the lipid carrier undecaprenyl phosphate, yielding undecaprenyl-pyrophosphoryl-MurNAc-pentapeptide, known as lipid I. In Paracidovorax citrulli (strain AAC00-1) (Acidovorax citrulli), this protein is Phospho-N-acetylmuramoyl-pentapeptide-transferase.